The following is a 556-amino-acid chain: 5-aminolevulinate synthase, mitochondrial (556 aa).

The N-terminal 46 residues, M1–A46, are a transit peptide targeting the mitochondrion. R105, S218, and K237 together coordinate substrate. 3 residues coordinate pyridoxal 5'-phosphate: S270, H298, and T342. K345 is an active-site residue. N6-(pyridoxal phosphate)lysine is present on K345. Pyridoxal 5'-phosphate contacts are provided by T374 and S375. T460 provides a ligand contact to substrate.

This sequence belongs to the class-II pyridoxal-phosphate-dependent aminotransferase family. In terms of assembly, homodimer. It depends on pyridoxal 5'-phosphate as a cofactor.

Its subcellular location is the mitochondrion matrix. It catalyses the reaction succinyl-CoA + glycine + H(+) = 5-aminolevulinate + CO2 + CoA. The protein operates within porphyrin-containing compound metabolism; protoporphyrin-IX biosynthesis; 5-aminolevulinate from glycine: step 1/1. In terms of biological role, catalyzes the synthesis of 5-aminolevulinate (ALA) from succinyl-CoA and glycine, the first and rate-limiting step in heme biosynthesis. This Eremothecium gossypii (strain ATCC 10895 / CBS 109.51 / FGSC 9923 / NRRL Y-1056) (Yeast) protein is 5-aminolevulinate synthase, mitochondrial (HEM1).